The following is a 965-amino-acid chain: Inner tegument protein (965 aa).

Residues W489–F965 are interaction with large tegument protein.

This sequence belongs to the herpesviridae inner tegument protein family. In terms of assembly, interacts (via C-terminus) with the large tegument protein/LTP (via N-terminus).

The protein localises to the virion tegument. The protein resides in the host cytoplasm. It localises to the host nucleus. Its subcellular location is the host Golgi apparatus. It is found in the host trans-Golgi network. Plays an essential role in cytoplasmic secondary envelopment during viral egress. Interacts with the capsid via the large tegument protein/LTP and participates in its transport to the host trans-Golgi network (TGN) where secondary envelopment occurs. Modulates tegumentation and capsid accumulation at the viral assembly complex. This is Inner tegument protein (63) from Equine herpesvirus 2 (strain 86/87) (EHV-2).